Reading from the N-terminus, the 443-residue chain is EGF-containing fibulin-like extracellular matrix protein 2 (443 aa).

An N-terminal signal peptide occupies residues 1–27 (MLPFASCLPGSLLLWAFLLLLLGAASP). Gln-28 bears the Pyrrolidone carboxylic acid mark. An EGF-like 1; atypical domain is found at 36–81 (YTECTDGYEWDADSQHCRDVNECLTIPEACKGEMKCINHYGGYLCL). Disulfide bonds link Cys-58–Cys-121, Cys-65–Cys-80, Cys-71–Cys-109, Cys-127–Cys-140, Cys-134–Cys-149, Cys-151–Cys-162, Cys-168–Cys-177, Cys-173–Cys-186, Cys-188–Cys-201, Cys-207–Cys-217, Cys-213–Cys-226, Cys-228–Cys-241, Cys-247–Cys-258, Cys-254–Cys-267, Cys-269–Cys-281, Cys-287–Cys-300, Cys-294–Cys-309, and Cys-315–Cys-327. The tract at residues 91-117 (LHGEGPPPPAAHAQQPNPCPQGYEPDE) is disordered. In terms of domain architecture, EGF-like 2; calcium-binding spans 123–163 (DVDECTQALHDCRPSQDCHNLPGSYQCTCPDGYRKIGPECV). One can recognise an EGF-like 3; calcium-binding domain in the interval 164 to 202 (DIDECRYRYCQHRCVNLPGSFRCQCEPGFQLGPNNRSCV). Asn-198 carries an N-linked (GlcNAc...) asparagine glycan. The EGF-like 4; calcium-binding domain maps to 203–242 (DVNECDMGAPCEQRCFNSYGTFLCRCNQGYELHRDGFSCS). In terms of domain architecture, EGF-like 5; calcium-binding spans 243 to 282 (DIDECGYSSYLCQYRCVNEPGRFSCHCPQGYQLLATRLCQ). Positions 283 to 328 (DIDECETGAHQCSEAQTCVNFHGGYRCVDTNRCVEPYVQVSDNRCL) constitute an EGF-like 6; calcium-binding domain. Residue Asn-394 is glycosylated (N-linked (GlcNAc...) asparagine).

This sequence belongs to the fibulin family. As to quaternary structure, homodimer; disulfide-linked. Multimer; allows heparin binding. Monomer. Binds preferentially to p53 mutants. Interacts with FBN1 (via N-terminal domain); this interaction inhibits EFEMP2 binding to LOX and ELN. Interacts with ELN with moderate affinity; this interaction regulates ELN self-assembly maturation stage. Interacts with PCOLCE. Interacts with collagen type IV trimer (COL4A1-COL4A1-COL4A2), NID2 and moderately with COL15A1-derived endostatin. Interacts with EMILIN1; this interaction promotes the incorporation of EFEMP2 into the extracellular matrix. Interacts with LTBP4; the LTBP4 long form (LTBP4L) has a stronger binding affinity than the LTBP4 short form and the LTBP4 long form promotes fibrillar deposition of EFEMP2. Interacts with LOX (via propeptide); this interaction is strong and facilitates formation of ternary complexes with ELN during elastic fiber assembly; this interaction limits interaction of EFEMP2 with FBLN5. Interacts with PITX2. Interacts with FBLN5 with moderate affinity. Interacts with LOXL1 (via propeptide), LTBP1 and TGFB1 stronger than with LOXL2 and LTBP3. In terms of processing, N-glycosylated; contains mostly complex-type glycans. Not O-glycosylated. Cleaved by ELANE; produces a 50-55 kDa fragment. Cleaved by MMP2 and MMP9; produces several fragments. As to expression, expressed in elastic fibers of the skin, near the dermal-epidermal junction, surrounding the hair follicles and throughout the dermis. Expressed in tendon around tenocytes. Prominently expressed in cartilage, bone, perichondrium and ligaments. Also detected in bone marrow stroma. Expressed in aorta, lung, and esophagus.

Its subcellular location is the secreted. It localises to the extracellular space. The protein localises to the extracellular matrix. The protein resides in the basement membrane. In terms of biological role, plays a crucial role in elastic fiber formation in tissue, and in the formation of ultrastructural connections between elastic laminae and smooth muscle cells in the aorta, therefore participates in terminal differentiation and maturation of smooth muscle cell (SMC) and in the mechanical properties and wall integrity maintenance of the aorta. In addition, is involved in the control of collagen fibril assembly in tissue throught proteolytic activation of LOX leading to cross- linking of collagen and elastin. Also promotes ELN coacervation and participates in the deposition of ELN coacervates on to microfibrils but also regulates ELN cross- linking through LOX interaction. Moreover adheres to the cells through heparin binding in a calcium-dependent manner and regulates vascularlar smooth muscle cells proliferation through angiotensin signaling. The chain is EGF-containing fibulin-like extracellular matrix protein 2 from Mus musculus (Mouse).